A 616-amino-acid chain; its full sequence is Glycogenin-1 (616 aa).

3 residues coordinate UDP: Leu10, Tyr16, and Arg95. 11 residues coordinate UDP-alpha-D-glucose: Leu10, Tyr16, Arg95, Lys104, Asp120, Asp122, Asn158, Ser159, Asp185, Asp188, and Gln189. Residues Asp120 and Asp122 each contribute to the UDP site. Positions 120 and 122 each coordinate Mn(2+). The O-linked (Glc...) tyrosine glycan is linked to Tyr230. Residues His247, Gly250, and Lys253 each coordinate UDP. Position 247 (His247) interacts with Mn(2+). UDP-alpha-D-glucose contacts are provided by Gly250 and Lys253. Over residues 283–302 the composition is skewed to basic and acidic residues; it reads HQLNNEVSKPKISDSDKTET. Disordered regions lie at residues 283 to 320, 335 to 354, 371 to 525, and 553 to 588; these read HQLNNEVSKPKISDSDKTETPETITPVDAPPSNEPTTN, NQNAEPVPNSDHSPAPNPVP, TNQP…EKDK, and RDATEGETKTSAVADKQEDMKLTAEETNQPQQEMPN. A compositionally biased stretch (basic and acidic residues) spans 377–386; sequence ESREYSKEND. Polar residues predominate over residues 400 to 419; the sequence is SPPNSTQELNSSYSVVSTQA. A compositionally biased stretch (low complexity) spans 450 to 461; the sequence is STAASSNNNVSN. 2 stretches are compositionally biased toward polar residues: residues 462-485 and 492-503; these read QPDGKNFSNSKENNISVESSPSNP and DNIQKPSVSTND. The span at 567-576 shows a compositional bias: basic and acidic residues; it reads DKQEDMKLTA. Positions 577–586 are enriched in polar residues; that stretch reads EETNQPQQEM. O-linked (Glc...) tyrosine glycosylation is present at Tyr598.

This sequence belongs to the glycosyltransferase 8 family. Glycogenin subfamily. Mn(2+) serves as cofactor.

It is found in the cytoplasm. Its subcellular location is the vacuole. The enzyme catalyses L-tyrosyl-[glycogenin] + UDP-alpha-D-glucose = alpha-D-glucosyl-L-tyrosyl-[glycogenin] + UDP + H(+). It carries out the reaction [1,4-alpha-D-glucosyl](n)-L-tyrosyl-[glycogenin] + UDP-alpha-D-glucose = [1,4-alpha-D-glucosyl](n+1)-L-tyrosyl-[glycogenin] + UDP + H(+). Self-glucosylating initiator of glycogen synthesis. It catalyzes the formation of a short alpha (1,4)-glucosyl chain covalently attached via a glucose 1-O-tyrosyl linkage to internal tyrosine residues and these chains act as primers for the elongation reaction catalyzed by glycogen synthase. Capable of transferring glucosyl residues to unbound acceptors such as free oligoglucans or oligoglucan derivatives. This chain is Glycogenin-1, found in Saccharomyces cerevisiae (strain ATCC 204508 / S288c) (Baker's yeast).